A 185-amino-acid chain; its full sequence is Putative manganese efflux pump MntP (185 aa).

6 helical membrane passes run 3–23 (IFTL…VSLA), 40–60 (LLFV…VSVI), 64–84 (FDAY…LRMI), 102–122 (TFSR…AVGI), 124–144 (LSLA…FVLI), and 165–185 (EIFG…DAMM).

It belongs to the MntP (TC 9.B.29) family.

The protein resides in the cell inner membrane. In terms of biological role, probably functions as a manganese efflux pump. This chain is Putative manganese efflux pump MntP, found in Elusimicrobium minutum (strain Pei191).